Consider the following 487-residue polypeptide: Serine/threonine-protein kinase 4 (487 aa).

M1 is subject to N-acetylmethionine. Position 3 is a phosphothreonine (T3). The Protein kinase domain maps to F30–V281. ATP is bound by residues L36–V44 and K59. D149 serves as the catalytic Proton acceptor. At T183 the chain carries Phosphothreonine; by autocatalysis. S265 is subject to Phosphoserine. The stretch at L290–R310 forms a coiled coil. Residues Q305 to M338 form a disordered region. Residues D313–D326 show a composition bias toward acidic residues. At S320 the chain carries Phosphoserine. Residues T340 and T367 each carry the phosphothreonine modification. At T387 the chain carries Phosphothreonine; by PKB/AKT1. Phosphoserine is present on residues S410 and S414. Y433 is subject to Phosphotyrosine. In terms of domain architecture, SARAH spans Y433–K480.

The protein belongs to the protein kinase superfamily. STE Ser/Thr protein kinase family. STE20 subfamily. As to quaternary structure, homodimer; mediated via the coiled-coil region. Interacts with NORE1, which inhibits autoactivation. Interacts with and stabilizes SAV1. Interacts with RASSF1. Interacts with FOXO3. Interacts with RASSF2 (via SARAH domain). Interacts with AR, PKB/AKT1, TNNI3 and SIRT1. Interacts with DLG5 (via PDZ domain 3). Interacts with MARK3 and SCRIB in the presence of DLG5. Mg(2+) serves as cofactor. Post-translationally, autophosphorylated on serine and threonine residues. Phosphorylation at Thr-387 by PKB/AKT1, leads to inhibition of its: kinase activity, nuclear translocation and autophosphorylation at Thr-183. It also diminishes its cleavage by caspases and its ability to phosphorylate FOXO3. Proteolytically cleaved by caspase-3 during apoptosis at Asp-326 and Asp-349 resulting in a 37 kDa or a 39 kDa subunit respectively. The 39 kDa subunit is further cleaved into the 37 kDa form. Proteolytic cleavage results in kinase activation and nuclear translocation of the truncated form (MST1/N). It is less likely that cleavage at Asp-349 is a prerequisite for activation as this site is not conserved in the murine ortholog.

It localises to the cytoplasm. Its subcellular location is the nucleus. The catalysed reaction is L-seryl-[protein] + ATP = O-phospho-L-seryl-[protein] + ADP + H(+). It carries out the reaction L-threonyl-[protein] + ATP = O-phospho-L-threonyl-[protein] + ADP + H(+). Inhibited by the C-terminal non-catalytic region. Activated by caspase-cleavage. Full activation also requires homodimerization and autophosphorylation of Thr-183. Activated by RASSF1 which acts by preventing its dephosphorylation. Functionally, stress-activated, pro-apoptotic kinase which, following caspase-cleavage, enters the nucleus and induces chromatin condensation followed by internucleosomal DNA fragmentation. Key component of the Hippo signaling pathway which plays a pivotal role in organ size control and tumor suppression by restricting proliferation and promoting apoptosis. The core of this pathway is composed of a kinase cascade wherein STK3/MST2 and STK4/MST1, in complex with its regulatory protein SAV1, phosphorylates and activates LATS1/2 in complex with its regulatory protein MOB1, which in turn phosphorylates and inactivates YAP1 oncoprotein and WWTR1/TAZ. Phosphorylation of YAP1 by LATS2 inhibits its translocation into the nucleus to regulate cellular genes important for cell proliferation, cell death, and cell migration. STK3/MST2 and STK4/MST1 are required to repress proliferation of mature hepatocytes, to prevent activation of facultative adult liver stem cells (oval cells), and to inhibit tumor formation. Phosphorylates 'Ser-14' of histone H2B (H2BS14ph) during apoptosis. Phosphorylates FOXO3 upon oxidative stress, which results in its nuclear translocation and cell death initiation. Phosphorylates MOBKL1A, MOBKL1B and RASSF2. Phosphorylates TNNI3 (cardiac Tn-I) and alters its binding affinity to TNNC1 (cardiac Tn-C) and TNNT2 (cardiac Tn-T). Phosphorylates FOXO1 on 'Ser-212' and regulates its activation and stimulates transcription of PMAIP1 in a FOXO1-dependent manner. Phosphorylates SIRT1 and inhibits SIRT1-mediated p53/TP53 deacetylation, thereby promoting p53/TP53 dependent transcription and apoptosis upon DNA damage. Acts as an inhibitor of PKB/AKT1. Phosphorylates AR on 'Ser-650' and suppresses its activity by intersecting with PKB/AKT1 signaling and antagonizing formation of AR-chromatin complexes. The sequence is that of Serine/threonine-protein kinase 4 (STK4) from Lemur catta (Ring-tailed lemur).